A 251-amino-acid chain; its full sequence is Coproheme decarboxylase (251 aa).

Residues Arg-133, 147–151 (YPMSK), His-174, Gln-187, and Ser-225 each bind Fe-coproporphyrin III. Residue Tyr-147 is part of the active site.

It belongs to the ChdC family. Type 1 subfamily. Homopentamer. Homohexamer in solution. The cofactor is Fe-coproporphyrin III.

It carries out the reaction Fe-coproporphyrin III + 2 H2O2 + 2 H(+) = heme b + 2 CO2 + 4 H2O. It catalyses the reaction Fe-coproporphyrin III + H2O2 + H(+) = harderoheme III + CO2 + 2 H2O. The catalysed reaction is harderoheme III + H2O2 + H(+) = heme b + CO2 + 2 H2O. The protein operates within porphyrin-containing compound metabolism; protoheme biosynthesis. Involved in coproporphyrin-dependent heme b biosynthesis. Catalyzes the decarboxylation of Fe-coproporphyrin III (coproheme) to heme b (protoheme IX), the last step of the pathway. The reaction occurs in a stepwise manner with a three-propionate intermediate. This chain is Coproheme decarboxylase, found in Listeria monocytogenes serovar 1/2a (strain ATCC BAA-679 / EGD-e).